Reading from the N-terminus, the 239-residue chain is uncharacterized protein (239 aa).

Residues 1 to 23 (MKTMVAMLLAAVGVAVSASSTLA) form the signal peptide. The span at 220-230 (AHPKQTLRDQR) shows a compositional bias: basic and acidic residues. Residues 220 to 239 (AHPKQTLRDQRPAGGDEITK) are disordered.

This is an uncharacterized protein from Sinorhizobium fredii (strain NBRC 101917 / NGR234).